Reading from the N-terminus, the 203-residue chain is Peroxiredoxin (203 aa).

The region spanning 3 to 156 is the Thioredoxin domain; that stretch reads VVLGQKAPDF…IIRVIKALQF (154 aa). The active-site Cysteine sulfenic acid (-SOH) intermediate is Cys-44. Arg-119 contributes to the substrate binding site.

It belongs to the peroxiredoxin family. Prx6 subfamily. In terms of assembly, homodecamer. Pentamer of dimers that assemble into a ring structure.

Its subcellular location is the cytoplasm. The catalysed reaction is a hydroperoxide + [thioredoxin]-dithiol = an alcohol + [thioredoxin]-disulfide + H2O. In terms of biological role, thiol-specific peroxidase that catalyzes the reduction of hydrogen peroxide and organic hydroperoxides to water and alcohols, respectively. Plays a role in cell protection against oxidative stress by detoxifying peroxides. The protein is Peroxiredoxin of Thermoplasma volcanium (strain ATCC 51530 / DSM 4299 / JCM 9571 / NBRC 15438 / GSS1).